The following is a 430-amino-acid chain: Serine--tRNA ligase (430 aa).

237 to 239 (TAE) provides a ligand contact to L-serine. Residue 268–270 (RSE) coordinates ATP. L-serine is bound at residue Glu291. 355 to 358 (EISS) contributes to the ATP binding site. Ser391 is an L-serine binding site.

Belongs to the class-II aminoacyl-tRNA synthetase family. Type-1 seryl-tRNA synthetase subfamily. As to quaternary structure, homodimer. The tRNA molecule binds across the dimer.

The protein resides in the cytoplasm. The enzyme catalyses tRNA(Ser) + L-serine + ATP = L-seryl-tRNA(Ser) + AMP + diphosphate + H(+). It carries out the reaction tRNA(Sec) + L-serine + ATP = L-seryl-tRNA(Sec) + AMP + diphosphate + H(+). It functions in the pathway aminoacyl-tRNA biosynthesis; selenocysteinyl-tRNA(Sec) biosynthesis; L-seryl-tRNA(Sec) from L-serine and tRNA(Sec): step 1/1. Functionally, catalyzes the attachment of serine to tRNA(Ser). Is also able to aminoacylate tRNA(Sec) with serine, to form the misacylated tRNA L-seryl-tRNA(Sec), which will be further converted into selenocysteinyl-tRNA(Sec). The protein is Serine--tRNA ligase of Salmonella enteritidis PT4 (strain P125109).